Reading from the N-terminus, the 268-residue chain is Microtubule-associated protein RP/EB family member 1 (268 aa).

An N-acetylalanine modification is found at A2. Positions 14–116 constitute a Calponin-homology (CH) domain; the sequence is NLSRHDMLAW…FVQWFKKFFD (103 aa). An N6-crotonyllysine modification is found at K66. The residue at position 124 (Y124) is a Phosphotyrosine. The tract at residues 124 to 268 is interaction with MTUS2/TIP150; the sequence is YDPVAARQGQ…GGPQEEQEEY (145 aa). Residues 147-160 are compositionally biased toward low complexity; sequence NKPKKPLSSSSAAP. The segment at 147–184 is disordered; sequence NKPKKPLSSSSAAPQRPITTHRTTATPKAGPGVVRKNP. A Phosphoserine modification is found at S155. The span at 163–172 shows a compositional bias: polar residues; that stretch reads PITTHRTTAT. The EB1 C-terminal domain maps to 185-255; it reads GVGNGDDEAA…LYATDEGFVI (71 aa). Residues 185–268 form an interaction with CDK5RAP2 region; sequence GVGNGDDEAA…GGPQEEQEEY (84 aa). Positions 206-211 are interaction with APC; that stretch reads TVEDLE. Residues 208 to 268 are DCTN1-binding; it reads EDLEKERDFY…GGPQEEQEEY (61 aa). K220 carries the N6-acetyllysine modification. The tract at residues 220 to 242 is APC-binding; that stretch reads KLRNIELICQENEGENNPVLQRI. The interval 232–255 is interaction with SKA1; it reads EGENNPVLQRIVDILYATDEGFVI.

It belongs to the MAPRE family. Homodimer. Heterodimer with MAPRE3. Interacts with DCTN1, DCTN2, TERF1 and dynein intermediate chain. Interaction with DIAPH1 and DIAPH2. Interacts (via C-terminal residues 206-211) with APC (via C-terminal residues 2674-2845); the interaction inhibits association with and bundling of F-actin. Interacts with CLASP2, DST, KIF2C and STIM1; probably required for their targeting to the growing microtubule plus ends. Interacts with MTUS2; interaction is direct and probably targets MTUS2 to microtubules. Interacts (via C-terminus) with SKA1 (via SXIP motif); the interaction is direct and stabilizes the kinetochore-microtubule attachment of the SKA1 complex. Interacts with APC2. Interacts with CLASP1. Interacts with CDK5RAP2. Interacts with MACF1. Interacts with RABL2/RABL2A; binds preferentially to GTP-bound RABL2. Interacts with KCNAB2. Interacts (via C-terminus) with CLIP1. Interacts with SLAIN2 and SLAIN1. Interacts with KIF18B; this interaction is required for efficient accumulation of KIF18B at microtubule plus ends. Interacts with MISP. Interacts with KNSTRN. Interacts with NCKAP5L. Interacts with CAMSAP2. Interacts with PDE4DIP isoform 13/MMG8/SMYLE; this interaction is required for its recruitment to the Golgi apparatus. Forms a pericentrosomal complex with AKAP9, CDK5RAP2 and PDE4DIP isoform 13/MMG8/SMYLE; within this complex, MAPRE1 binding to CDK5RAP2 may be mediated by PDE4DIP. Interacts with AKNA. Interacts with GAS2L1, GAS2L2, and GAS2L3. Acetylation at Lys-220 by KAT2B/PCAF promotes dynamic kinetochore-microtubule interactions in early mitosis. Post-translationally, crotonylated by KAT5 during mitosis, promoting astral microtubule plasticity and dynamic connection between astral microtubules and the cortex during mitotic chromosome segregation, thereby ensuring accurate spindle positioning in mitosis. Decrotonylated by HDAC3.

The protein localises to the cytoplasm. Its subcellular location is the cytoskeleton. It is found in the microtubule organizing center. The protein resides in the centrosome. It localises to the golgi apparatus. The protein localises to the spindle. Its subcellular location is the spindle pole. Its function is as follows. Plus-end tracking protein (+TIP) that binds to the plus-end of microtubules and regulates the dynamics of the microtubule cytoskeleton. Recruits other +TIP proteins to microtubules by binding to a conserved Ser-X-Leu-Pro (SXLP) motif in their polypeptide chains. Promotes cytoplasmic microtubule nucleation and elongation. Involved in mitotic spindle positioning by stabilizing microtubules and promoting dynamic connection between astral microtubules and the cortex during mitotic chromosome segregation. Assists chromosome alignment in metaphase by recruiting the SKA complex to the spindle and stabilizing its interactions with microtubule bundles (K-fibers). Also acts as a regulator of minus-end microtubule organization: interacts with the complex formed by AKAP9 and PDE4DIP, leading to recruit CAMSAP2 to the Golgi apparatus, thereby tethering non-centrosomal minus-end microtubules to the Golgi, an important step for polarized cell movement. Promotes elongation of CAMSAP2-decorated microtubule stretches on the minus-end of microtubules. Acts as a regulator of autophagosome transport via interaction with CAMSAP2. Functions downstream of Rho GTPases and DIAPH1 in stable microtubule formation. May play a role in cell migration. The chain is Microtubule-associated protein RP/EB family member 1 (MAPRE1) from Bos taurus (Bovine).